Reading from the N-terminus, the 513-residue chain is Maturase K (513 aa).

This sequence belongs to the intron maturase 2 family. MatK subfamily.

It is found in the plastid. It localises to the chloroplast. Usually encoded in the trnK tRNA gene intron. Probably assists in splicing its own and other chloroplast group II introns. This Keckiella cordifolia (Heart-leafed penstemon) protein is Maturase K.